A 98-amino-acid polypeptide reads, in one-letter code: NADH-ubiquinone oxidoreductase chain 4L (98 aa).

3 helical membrane-spanning segments follow: residues 1-21 (MALI…GLLL), 29-49 (SLLC…VMIL), and 61-81 (IVLL…LVMV).

The protein belongs to the complex I subunit 4L family. In terms of assembly, core subunit of respiratory chain NADH dehydrogenase (Complex I) which is composed of 45 different subunits.

It localises to the mitochondrion inner membrane. It carries out the reaction a ubiquinone + NADH + 5 H(+)(in) = a ubiquinol + NAD(+) + 4 H(+)(out). Its function is as follows. Core subunit of the mitochondrial membrane respiratory chain NADH dehydrogenase (Complex I) which catalyzes electron transfer from NADH through the respiratory chain, using ubiquinone as an electron acceptor. Part of the enzyme membrane arm which is embedded in the lipid bilayer and involved in proton translocation. This Rhinolophus monoceros (Formosan lesser horseshoe bat) protein is NADH-ubiquinone oxidoreductase chain 4L (MT-ND4L).